Consider the following 497-residue polypeptide: MPMKFEFSFSKSHRPAGGAAVLLQVAGAKEAAGAAVVDPEGVLAKAAKIGKFTGKALSTLDVIAPHGSPADRIVLLGLGDAGGVGDHDWLKAGGAAAAKLRSAEKITVFLDAPGLEVTGKAAADFALGMEMNAYGFESYKTRKSDDEPKAAQKPVKVTIVTGTVIAAKKAFMTAQAVGEGVFLARDLVNEPANVLGPVEFAARAKELERLGVDVEILTEREMKKLGMGALLGVAQGSSRPPRLVVMQWKGGKAKEKPVAFIGKGVVFDTGGISIKPASGMEEMKGDMGGAAAVTGLMHVLAARKAAVNAIGIIGLVENMPDGSAQRPGDIVTSMSGQTIEVINTDAEGRLVLGDALWYCNDRFKPQLMIDLATLTGAIMVALSNHYAGLFSNDDRLAEQLLAAGLATQERLWRMPLGKEYDKMIDSKFADMKNTGGRHGGSVTAAQFLKRFVKDTPWAHLDIAGTAMGSPTDEINQSWGSGFGVRLLDQLVRANYES.

Mn(2+)-binding residues include lysine 263 and aspartate 268. Lysine 275 is a catalytic residue. Aspartate 286, aspartate 345, and glutamate 347 together coordinate Mn(2+). Arginine 349 is an active-site residue.

Belongs to the peptidase M17 family. Mn(2+) serves as cofactor.

The protein resides in the cytoplasm. The enzyme catalyses Release of an N-terminal amino acid, Xaa-|-Yaa-, in which Xaa is preferably Leu, but may be other amino acids including Pro although not Arg or Lys, and Yaa may be Pro. Amino acid amides and methyl esters are also readily hydrolyzed, but rates on arylamides are exceedingly low.. The catalysed reaction is Release of an N-terminal amino acid, preferentially leucine, but not glutamic or aspartic acids.. Its function is as follows. Presumably involved in the processing and regular turnover of intracellular proteins. Catalyzes the removal of unsubstituted N-terminal amino acids from various peptides. The sequence is that of Probable cytosol aminopeptidase from Rhizobium meliloti (strain 1021) (Ensifer meliloti).